Here is a 239-residue protein sequence, read N- to C-terminus: Probable transcriptional regulatory protein BC_0539 (239 aa).

The protein belongs to the TACO1 family. YeeN subfamily.

Its subcellular location is the cytoplasm. This is Probable transcriptional regulatory protein BC_0539 from Bacillus cereus (strain ATCC 14579 / DSM 31 / CCUG 7414 / JCM 2152 / NBRC 15305 / NCIMB 9373 / NCTC 2599 / NRRL B-3711).